We begin with the raw amino-acid sequence, 119 residues long: Ribonuclease P protein component (119 aa).

Belongs to the RnpA family. Consists of a catalytic RNA component (M1 or rnpB) and a protein subunit.

It carries out the reaction Endonucleolytic cleavage of RNA, removing 5'-extranucleotides from tRNA precursor.. Its function is as follows. RNaseP catalyzes the removal of the 5'-leader sequence from pre-tRNA to produce the mature 5'-terminus. It can also cleave other RNA substrates such as 4.5S RNA. The protein component plays an auxiliary but essential role in vivo by binding to the 5'-leader sequence and broadening the substrate specificity of the ribozyme. This is Ribonuclease P protein component from Mycolicibacterium paratuberculosis (strain ATCC BAA-968 / K-10) (Mycobacterium paratuberculosis).